The chain runs to 177 residues: Large ribosomal subunit protein uL6 (177 aa).

Belongs to the universal ribosomal protein uL6 family. In terms of assembly, part of the 50S ribosomal subunit.

In terms of biological role, this protein binds to the 23S rRNA, and is important in its secondary structure. It is located near the subunit interface in the base of the L7/L12 stalk, and near the tRNA binding site of the peptidyltransferase center. The protein is Large ribosomal subunit protein uL6 of Photobacterium profundum (strain SS9).